An 849-amino-acid chain; its full sequence is Membrane protein-large ribosomal subunit bL9 fusion protein (849 aa).

The interval 1-680 (MFSKNKHNTK…TQLEGTNIKT (680 aa)) is unknown. Transmembrane regions (helical) follow at residues 11–31 (FIVIACVIVVLILILFCFDFQ) and 64–84 (IIFFIFNFFGKIILASFIISF). The GGDEF domain maps to 214 to 342 (KTLAIAMIAF…GGDQVVVNIE (129 aa)). The segment at 681–849 (VTDTLKHFLK…FLNVTERKSK (169 aa)) is large ribosomal subunit protein bL9.

Belongs to the bacterial ribosomal protein bL9 family.

It is found in the cell membrane. Binds to the 23S rRNA. This Aster yellows witches'-broom phytoplasma (strain AYWB) protein is Membrane protein-large ribosomal subunit bL9 fusion protein.